The following is a 1399-amino-acid chain: DNA-directed RNA polymerase subunit beta' (1399 aa).

Zn(2+) is bound by residues Cys70, Cys72, Cys85, and Cys88. The Mg(2+) site is built by Asp460, Asp462, and Asp464. Cys814, Cys888, Cys895, and Cys898 together coordinate Zn(2+).

This sequence belongs to the RNA polymerase beta' chain family. The RNAP catalytic core consists of 2 alpha, 1 beta, 1 beta' and 1 omega subunit. When a sigma factor is associated with the core the holoenzyme is formed, which can initiate transcription. It depends on Mg(2+) as a cofactor. Zn(2+) serves as cofactor.

It carries out the reaction RNA(n) + a ribonucleoside 5'-triphosphate = RNA(n+1) + diphosphate. DNA-dependent RNA polymerase catalyzes the transcription of DNA into RNA using the four ribonucleoside triphosphates as substrates. In Pseudomonas fluorescens (strain Pf0-1), this protein is DNA-directed RNA polymerase subunit beta'.